The chain runs to 892 residues: Translation initiation factor IF-2 (892 aa).

The tract at residues 66–305 is disordered; the sequence is TRSTLNIPGT…SLQQGFQKPA (240 aa). A compositionally biased stretch (polar residues) spans 68–82; sequence STLNIPGTGGKSKSV. Composition is skewed to basic and acidic residues over residues 93 to 159 and 166 to 216; these read VKRD…KDKV and DMTK…EENK. Basic residues predominate over residues 254–269; it reads GRGRNAKAARPAKKGK. The segment covering 270 to 282 has biased composition (basic and acidic residues); sequence HAESKADREEARA. In terms of domain architecture, tr-type G spans 391 to 560; sequence PRAPVVTIMG…LLQAEVLELK (170 aa). A G1 region spans residues 400 to 407; that stretch reads GHVDHGKT. Residue 400–407 participates in GTP binding; the sequence is GHVDHGKT. Positions 425–429 are G2; it reads GITQH. Residues 446–449 form a G3 region; it reads DTPG. GTP is bound by residues 446–450 and 500–503; these read DTPGH and NKID. The interval 500 to 503 is G4; that stretch reads NKID. A G5 region spans residues 536–538; that stretch reads SAK.

The protein belongs to the TRAFAC class translation factor GTPase superfamily. Classic translation factor GTPase family. IF-2 subfamily.

Its subcellular location is the cytoplasm. One of the essential components for the initiation of protein synthesis. Protects formylmethionyl-tRNA from spontaneous hydrolysis and promotes its binding to the 30S ribosomal subunits. Also involved in the hydrolysis of GTP during the formation of the 70S ribosomal complex. The chain is Translation initiation factor IF-2 from Salmonella typhi.